The chain runs to 110 residues: MKKLLAMILWLQLDRLSGELKVEQNPLFLSMQEGKNYTIYCNYSTTSDRLYWYRQDPGKSLESLFVLLSNGAVKQEGRLMASLDTKARLSTLHITAAVHDLSATYFCAVD.

An N-terminal signal peptide occupies residues 1-18 (MKKLLAMILWLQLDRLSG). An Ig-like domain is found at 19 to 110 (ELKVEQNPLF…LSATYFCAVD (92 aa)). 2 N-linked (GlcNAc...) asparagine glycosylation sites follow: Asn36 and Asn42. Cys41 and Cys107 are disulfide-bonded.

As to quaternary structure, alpha-beta TR is a heterodimer composed of an alpha and beta chain; disulfide-linked. The alpha-beta TR is associated with the transmembrane signaling CD3 coreceptor proteins to form the TR-CD3 (TcR or TCR). The assembly of alpha-beta TR heterodimers with CD3 occurs in the endoplasmic reticulum where a single alpha-beta TR heterodimer associates with one CD3D-CD3E heterodimer, one CD3G-CD3E heterodimer and one CD247 homodimer forming a stable octameric structure. CD3D-CD3E and CD3G-CD3E heterodimers preferentially associate with TR alpha and TR beta chains, respectively. The association of the CD247 homodimer is the last step of TcR assembly in the endoplasmic reticulum and is required for transport to the cell surface.

It localises to the cell membrane. V region of the variable domain of T cell receptor (TR) alpha chain that participates in the antigen recognition. Alpha-beta T cell receptors are antigen specific receptors which are essential to the immune response and are present on the cell surface of T lymphocytes. Recognize peptide-major histocompatibility (MH) (pMH) complexes that are displayed by antigen presenting cells (APC), a prerequisite for efficient T cell adaptive immunity against pathogens. Binding of alpha-beta TR to pMH complex initiates TR-CD3 clustering on the cell surface and intracellular activation of LCK that phosphorylates the ITAM motifs of CD3G, CD3D, CD3E and CD247 enabling the recruitment of ZAP70. In turn ZAP70 phosphorylates LAT, which recruits numerous signaling molecules to form the LAT signalosome. The LAT signalosome propagates signal branching to three major signaling pathways, the calcium, the mitogen-activated protein kinase (MAPK) kinase and the nuclear factor NF-kappa-B (NF-kB) pathways, leading to the mobilization of transcription factors that are critical for gene expression and essential for T cell growth and differentiation. The T cell repertoire is generated in the thymus, by V-(D)-J rearrangement. This repertoire is then shaped by intrathymic selection events to generate a peripheral T cell pool of self-MH restricted, non-autoaggressive T cells. Post-thymic interaction of alpha-beta TR with the pMH complexes shapes TR structural and functional avidity. The protein is T cell receptor alpha variable 39 of Homo sapiens (Human).